A 199-amino-acid chain; its full sequence is Recombination protein RecR (199 aa).

The C4-type zinc-finger motif lies at 58 to 73; it reads CSVCSNLTDIDPCPLC. One can recognise a Toprim domain in the interval 81-176; sequence TVICVVQDPR…KATRIAHGIP (96 aa).

Belongs to the RecR family.

Its function is as follows. May play a role in DNA repair. It seems to be involved in an RecBC-independent recombinational process of DNA repair. It may act with RecF and RecO. This chain is Recombination protein RecR, found in Ruminiclostridium cellulolyticum (strain ATCC 35319 / DSM 5812 / JCM 6584 / H10) (Clostridium cellulolyticum).